We begin with the raw amino-acid sequence, 93 residues long: Small ribosomal subunit protein uS19c (93 aa).

The tract at residues 73 to 93 (EFSPTRTFRGHTKSDKKSRRP) is disordered. Over residues 80 to 93 (FRGHTKSDKKSRRP) the composition is skewed to basic residues.

This sequence belongs to the universal ribosomal protein uS19 family.

The protein localises to the plastid. It localises to the chloroplast. Functionally, protein S19 forms a complex with S13 that binds strongly to the 16S ribosomal RNA. This is Small ribosomal subunit protein uS19c (rps19) from Mesostigma viride (Green alga).